The primary structure comprises 112 residues: MSGKIKVTFIINDGEEKTVEAPIGLSILEIAHSNDLDLEGACEGSLACATCHVILEEEFYNKLKKPTEAEEDMLDLAFGLTDTSRLGCQIILTEELDGIKVHLPAATRNIKL.

The 2Fe-2S ferredoxin-type domain maps to 5–107 (IKVTFIINDG…GIKVHLPAAT (103 aa)). 4 residues coordinate [2Fe-2S] cluster: cysteine 42, cysteine 48, cysteine 51, and cysteine 88.

Belongs to the adrenodoxin/putidaredoxin family. [2Fe-2S] cluster is required as a cofactor.

In terms of biological role, ferredoxin are iron-sulfur proteins that transfer electrons in a wide variety of metabolic reactions. The protein is 2Fe-2S ferredoxin (fdxB) of Rickettsia rickettsii.